The chain runs to 688 residues: Polyphosphate kinase (688 aa).

Position 45 (asparagine 45) interacts with ATP. The Mg(2+) site is built by arginine 375 and arginine 405. Positions 430–464 constitute a PLD phosphodiesterase domain; the sequence is PGLKIHAKLFLISRKENGEVVRYAHIGTGNFNEKT. Histidine 435 serves as the catalytic Phosphohistidine intermediate. ATP contacts are provided by tyrosine 468, arginine 564, and histidine 592.

This sequence belongs to the polyphosphate kinase 1 (PPK1) family. Mg(2+) serves as cofactor. An intermediate of this reaction is the autophosphorylated ppk in which a phosphate is covalently linked to a histidine residue through a N-P bond.

The catalysed reaction is [phosphate](n) + ATP = [phosphate](n+1) + ADP. Its function is as follows. Catalyzes the reversible transfer of the terminal phosphate of ATP to form a long-chain polyphosphate (polyP). The protein is Polyphosphate kinase of Escherichia coli O6:H1 (strain CFT073 / ATCC 700928 / UPEC).